The chain runs to 470 residues: Carboxypeptidase Q (470 aa).

Positions 1 to 18 are cleaved as a signal peptide; that stretch reads MRSLFFLFIVHLLALGSG. A propeptide spanning residues 19–42 is cleaved from the precursor; sequence KAVFKNGVSQRTFREIKEEIANYE. Residue N59 is glycosylated (N-linked (GlcNAc...) asparagine). Residues H288 and D300 each coordinate Zn(2+). Residue E334 is the Nucleophile of the active site. Position 335 (E335) interacts with Zn(2+). N351 carries an N-linked (GlcNAc...) asparagine glycan. A Zn(2+)-binding site is contributed by D362. N-linked (GlcNAc...) asparagine glycosylation is present at N394. H432 lines the Zn(2+) pocket.

The protein belongs to the peptidase M28 family. Homodimer. The monomeric form is inactive while the homodimer is active. Post-translationally, N-glycosylated. The secreted form is modified by hybrid or complex type oligosaccharide chains.

It localises to the endoplasmic reticulum. The protein resides in the golgi apparatus. It is found in the lysosome. Its subcellular location is the secreted. In terms of biological role, carboxypeptidase that may play an important role in the hydrolysis of circulating peptides. Catalyzes the hydrolysis of dipeptides with unsubstituted terminals into amino acids. May play a role in the liberation of thyroxine hormone from its thyroglobulin (Tg) precursor. This chain is Carboxypeptidase Q (Cpq), found in Mus musculus (Mouse).